Reading from the N-terminus, the 319-residue chain is Na(+)-translocating NADH-quinone reductase subunit C (319 aa).

A helical transmembrane segment spans residues Trp-14–Val-34. Thr-283 is modified (FMN phosphoryl threonine).

It belongs to the NqrC family. As to quaternary structure, composed of six subunits; NqrA, NqrB, NqrC, NqrD, NqrE and NqrF. FMN is required as a cofactor.

It localises to the cell inner membrane. It carries out the reaction a ubiquinone + n Na(+)(in) + NADH + H(+) = a ubiquinol + n Na(+)(out) + NAD(+). Functionally, NQR complex catalyzes the reduction of ubiquinone-1 to ubiquinol by two successive reactions, coupled with the transport of Na(+) ions from the cytoplasm to the periplasm. NqrA to NqrE are probably involved in the second step, the conversion of ubisemiquinone to ubiquinol. This chain is Na(+)-translocating NADH-quinone reductase subunit C, found in Chlamydia caviae (strain ATCC VR-813 / DSM 19441 / 03DC25 / GPIC) (Chlamydophila caviae).